We begin with the raw amino-acid sequence, 82 residues long: Small ribosomal subunit protein uS17 (82 aa).

Belongs to the universal ribosomal protein uS17 family. In terms of assembly, part of the 30S ribosomal subunit.

Its function is as follows. One of the primary rRNA binding proteins, it binds specifically to the 5'-end of 16S ribosomal RNA. This is Small ribosomal subunit protein uS17 from Shewanella woodyi (strain ATCC 51908 / MS32).